The primary structure comprises 393 residues: NAD(P)H-quinone oxidoreductase subunit H, chloroplastic (393 aa).

It belongs to the complex I 49 kDa subunit family. NDH is composed of at least 16 different subunits, 5 of which are encoded in the nucleus.

Its subcellular location is the plastid. It localises to the chloroplast thylakoid membrane. It catalyses the reaction a plastoquinone + NADH + (n+1) H(+)(in) = a plastoquinol + NAD(+) + n H(+)(out). The catalysed reaction is a plastoquinone + NADPH + (n+1) H(+)(in) = a plastoquinol + NADP(+) + n H(+)(out). NDH shuttles electrons from NAD(P)H:plastoquinone, via FMN and iron-sulfur (Fe-S) centers, to quinones in the photosynthetic chain and possibly in a chloroplast respiratory chain. The immediate electron acceptor for the enzyme in this species is believed to be plastoquinone. Couples the redox reaction to proton translocation, and thus conserves the redox energy in a proton gradient. This is NAD(P)H-quinone oxidoreductase subunit H, chloroplastic from Lactuca sativa (Garden lettuce).